Consider the following 157-residue polypeptide: Small ribosomal subunit protein uS7 (157 aa).

This sequence belongs to the universal ribosomal protein uS7 family. As to quaternary structure, part of the 30S ribosomal subunit. Contacts proteins S9 and S11.

One of the primary rRNA binding proteins, it binds directly to 16S rRNA where it nucleates assembly of the head domain of the 30S subunit. Is located at the subunit interface close to the decoding center, probably blocks exit of the E-site tRNA. This is Small ribosomal subunit protein uS7 from Psychrobacter cryohalolentis (strain ATCC BAA-1226 / DSM 17306 / VKM B-2378 / K5).